We begin with the raw amino-acid sequence, 505 residues long: Circadian clock protein KaiC3 (505 aa).

2 consecutive KaiC domains span residues 10 to 252 and 253 to 485; these read EKLE…KSSD and IRIT…LAGT. Residue serine 423 is modified to Phosphoserine; by autocatalysis. A Phosphothreonine; by autocatalysis modification is found at threonine 424.

This sequence belongs to the KaiC family. Multimerizes, probably forming homohexamers, no interaction with KaiC1 or KaiC2 is seen. In another study forms hexamers, interacts with KaiB1, KaiB3, and KaiC1. In terms of processing, autophosphorylates and dephosphorylates. Dephosphorylation of KaiC3 was higher at 25 than at 30 or 35 degrees Celsius.

The enzyme catalyses L-seryl-[protein] + ATP = O-phospho-L-seryl-[protein] + ADP + H(+). It catalyses the reaction L-threonyl-[protein] + ATP = O-phospho-L-threonyl-[protein] + ADP + H(+). The catalysed reaction is ATP + H2O = ADP + phosphate + H(+). Its activity is regulated as follows. ATPase activity is influenced by KaiB1 and KaiB3 in vitro; ATPase is reduced 35% by the KaiB1 tetramer and 55% by the KaiB3 monomer but not affected by KaiA or the KaiB3 tetramer. Functionally, seems to be linked to dark adaption of Synechocystis cells, but is not as essential as the core oscillator KaiAB1C1 for the circadian cycle. KaiB3 and KaiC3 may cross talk with the core oscillator. Autophosphorylates and dephosphorylates independently of KaiA. Has a weak ATPase, hydrolyzes 8.5 ATP/monomer/day, has no detectable ATP synthesis activity. ATPase activity reduced 55% by KaiB3 monomer but not the KaiB3 tetramer or KaiA in vitro, reduced 35% by KaiB1 tetramer. This is Circadian clock protein KaiC3 from Synechocystis sp. (strain ATCC 27184 / PCC 6803 / Kazusa).